A 333-amino-acid polypeptide reads, in one-letter code: ADP-L-glycero-D-manno-heptose-6-epimerase (333 aa).

NADP(+) is bound by residues Phe-11–Ile-12, Asp-32–Asn-33, Lys-39, Lys-54, Gln-76–Ser-80, and Asn-93. Residue Tyr-140 is the Proton acceptor of the active site. Position 144 (Lys-144) interacts with NADP(+). Asn-170 serves as a coordination point for substrate. The NADP(+) site is built by Val-171 and Lys-179. The active-site Proton acceptor is the Lys-179. Residues Arg-181, His-188, Phe-202–Trp-205, Arg-215, and Tyr-294 each bind substrate.

It belongs to the NAD(P)-dependent epimerase/dehydratase family. HldD subfamily. In terms of assembly, homopentamer. NADP(+) is required as a cofactor.

The enzyme catalyses ADP-D-glycero-beta-D-manno-heptose = ADP-L-glycero-beta-D-manno-heptose. Its pathway is nucleotide-sugar biosynthesis; ADP-L-glycero-beta-D-manno-heptose biosynthesis; ADP-L-glycero-beta-D-manno-heptose from D-glycero-beta-D-manno-heptose 7-phosphate: step 4/4. It participates in bacterial outer membrane biogenesis; LPS core biosynthesis. In terms of biological role, catalyzes the interconversion between ADP-D-glycero-beta-D-manno-heptose and ADP-L-glycero-beta-D-manno-heptose via an epimerization at carbon 6 of the heptose. The sequence is that of ADP-L-glycero-D-manno-heptose-6-epimerase from Chromobacterium violaceum (strain ATCC 12472 / DSM 30191 / JCM 1249 / CCUG 213 / NBRC 12614 / NCIMB 9131 / NCTC 9757 / MK).